A 185-amino-acid polypeptide reads, in one-letter code: MSKEVLATAKEKMTKAEESLRRELGQIRAGRANASLLDRIQVEYYGAPTPVNQLASINIPEARVLMITPFDKNSIADIEKAIQMSDIGISPTNDGNVIRLVIPQLTEERRKELAKDVKKEAENSKVAVRNVRRDAMDELKKAQKNGDITEDELRSFEKDVQKLTDDSIKNIDAITAEKEQELLEV.

This sequence belongs to the RRF family.

It localises to the cytoplasm. Responsible for the release of ribosomes from messenger RNA at the termination of protein biosynthesis. May increase the efficiency of translation by recycling ribosomes from one round of translation to another. The chain is Ribosome-recycling factor from Enterococcus faecalis (strain ATCC 700802 / V583).